The primary structure comprises 279 residues: Tryptophan 2,3-dioxygenase (279 aa).

Substrate contacts are provided by residues 48 to 52 (FIIQH), tyrosine 110, and arginine 114. Histidine 237 provides a ligand contact to heme. Position 251 (threonine 251) interacts with substrate.

Belongs to the tryptophan 2,3-dioxygenase family. As to quaternary structure, homotetramer. The cofactor is heme.

It catalyses the reaction L-tryptophan + O2 = N-formyl-L-kynurenine. It participates in amino-acid degradation; L-tryptophan degradation via kynurenine pathway; L-kynurenine from L-tryptophan: step 1/2. In terms of biological role, heme-dependent dioxygenase that catalyzes the oxidative cleavage of the L-tryptophan (L-Trp) pyrrole ring and converts L-tryptophan to N-formyl-L-kynurenine. Catalyzes the oxidative cleavage of the indole moiety. The chain is Tryptophan 2,3-dioxygenase from Bradyrhizobium sp. (strain BTAi1 / ATCC BAA-1182).